An 812-amino-acid chain; its full sequence is 5-methyltetrahydropteroyltriglutamate--homocysteine methyltransferase 3, chloroplastic (812 aa).

The transit peptide at 1-33 (MGQLALQRLQPLASLPRRPPSLPPPSSATPSLP) directs the protein to the chloroplast. The segment at 13–33 (ASLPRRPPSLPPPSSATPSLP) is disordered. Residues 17-27 (RRPPSLPPPSS) are compositionally biased toward pro residues. 5-methyltetrahydropteroyltri-L-glutamate is bound by residues Lys-66 and Asn-164. A disordered region spans residues 430 to 456 (MRQASRRSSPRVTNAAVQQDVDAVKKS). L-homocysteine is bound by residues 485–487 (IGS) and Glu-538. L-methionine contacts are provided by residues 485–487 (IGS) and Glu-538. 5-methyltetrahydropteroyltri-L-glutamate contacts are provided by residues Asp-543, Tyr-566, 569–570 (RC), and Trp-615. L-homocysteine is bound at residue Asp-653. Asp-653 contributes to the L-methionine binding site. Positions 695, 697, 706, 710, and 719 each coordinate Zn(2+). The Proton donor role is filled by His-749. Position 781 (Cys-781) interacts with Zn(2+).

It belongs to the vitamin-B12 independent methionine synthase family. The cofactor is Zn(2+). In terms of tissue distribution, expressed in seeds.

It localises to the plastid. Its subcellular location is the chloroplast. The enzyme catalyses 5-methyltetrahydropteroyltri-L-glutamate + L-homocysteine = tetrahydropteroyltri-L-glutamate + L-methionine. The protein operates within amino-acid biosynthesis; L-methionine biosynthesis via de novo pathway; L-methionine from L-homocysteine (MetE route): step 1/1. Catalyzes the transfer of a methyl group from 5-methyltetrahydrofolate to homocysteine resulting in methionine formation. This Arabidopsis thaliana (Mouse-ear cress) protein is 5-methyltetrahydropteroyltriglutamate--homocysteine methyltransferase 3, chloroplastic (MS3).